The following is a 620-amino-acid chain: Chaperone protein DnaK (620 aa).

A Phosphothreonine; by autocatalysis modification is found at Thr-197. The segment at 591 to 620 (AQKLGEAMANKNNAEQPKKKDDDVIDAEVE) is disordered.

This sequence belongs to the heat shock protein 70 family.

In terms of biological role, acts as a chaperone. This chain is Chaperone protein DnaK, found in Helicobacter pylori (strain HPAG1).